Here is a 358-residue protein sequence, read N- to C-terminus: Methylthioribose-1-phosphate isomerase (358 aa).

Substrate contacts are provided by residues 54-56, arginine 96, and glutamine 205; that span reads RGA. Aspartate 246 acts as the Proton donor in catalysis. 256-257 is a substrate binding site; that stretch reads NK.

It belongs to the eIF-2B alpha/beta/delta subunits family. MtnA subfamily.

The enzyme catalyses 5-(methylsulfanyl)-alpha-D-ribose 1-phosphate = 5-(methylsulfanyl)-D-ribulose 1-phosphate. It functions in the pathway amino-acid biosynthesis; L-methionine biosynthesis via salvage pathway; L-methionine from S-methyl-5-thio-alpha-D-ribose 1-phosphate: step 1/6. Catalyzes the interconversion of methylthioribose-1-phosphate (MTR-1-P) into methylthioribulose-1-phosphate (MTRu-1-P). This chain is Methylthioribose-1-phosphate isomerase, found in Ectopseudomonas mendocina (strain ymp) (Pseudomonas mendocina).